The primary structure comprises 338 residues: RAB6-interacting golgin (338 aa).

Basic and acidic residues-rich tracts occupy residues 1 to 14 (MTEKFNGFSHDEIL) and 46 to 59 (RMPDKIFRQADQLR). 2 disordered regions span residues 1–109 (MTEK…LNLD) and 127–188 (ARDK…SPFK). Composition is skewed to low complexity over residues 60-73 (KQQQQQPQQPIQKP) and 153-167 (SGGDSQTTSSTDDGS). The stretch at 192–244 (LKDFEQHRRMIEEQNKQKKQMLYQAIEQHTQKTAAESRKIEEIRHELSKLESD) forms a coiled coil. Positions 244-260 (DLAVDVALLRKQIDNAC) are essential for Sas-6 binding. Residues 246–286 (AVDVALLRKQIDNACIHFANVEKQYVKIEAQFLRAKIELHN) form a necessary for localization to the centrosome region. The tract at residues 246–323 (AVDVALLRKQ…TELMQKVGLS (78 aa)) is necessary for localization to the Golgi. The segment at 260–286 (CIHFANVEKQYVKIEAQFLRAKIELHN) is necessary for interaction with Sas-6 and essential for homodimerization.

This sequence belongs to the GORAB family. In terms of assembly, homodimer (via C-terminus); dimerization appears to be required for its trans-Golgi localization but not for its function and centriolar localization. Interacts (via C-terminus) with Rab6; binds Rab6 as a homodimer, this interaction seems to be required for trans-Golgi localization. Interacts (via C-terminus) with Sas-6; binds as a monomer to a Sas-6 homodimer.

The protein resides in the cytoplasm. It is found in the cytoskeleton. It localises to the microtubule organizing center. The protein localises to the centrosome. Its subcellular location is the centriole. The protein resides in the golgi apparatus. It is found in the trans-Golgi network. Required for centriole duplication likely through its interaction with Sas-6. During embryogenesis, maternally provided protein is required for centrosome duplication and nuclear division cycles of the syncytial embryos. In femoral chordotonal organs, required for sensory cilia structural integrity and functionality necessary for motor coordination. In male germline, has a role in cytokinesis which seems dependent on its localization to the Golgi. This Drosophila melanogaster (Fruit fly) protein is RAB6-interacting golgin.